A 224-amino-acid polypeptide reads, in one-letter code: Proline/serine-rich protein C17A5.10 (224 aa).

Residues 1-10 (MTDDSVPPPS) are compositionally biased toward pro residues. The disordered stretch occupies residues 1-110 (MTDDSVPPPS…SNYNTAKPPY (110 aa)). The segment covering 31 to 52 (TSTSAGHPSSSSSTLPNYAASS) has biased composition (low complexity). Composition is skewed to polar residues over residues 53 to 68 (LNSRPVSSSGSGNAYS), 77 to 94 (PTSQRPNSWQPGNASTMY), and 101 to 110 (SNYNTAKPPY).

Belongs to the HUA1 family.

The protein localises to the cytoplasm. Its function is as follows. May be involved in assembly and disassembly of the actin cytoskeleton. In Schizosaccharomyces pombe (strain 972 / ATCC 24843) (Fission yeast), this protein is Proline/serine-rich protein C17A5.10.